The following is a 427-amino-acid chain: Anaerobic glycerol-3-phosphate dehydrogenase subunit B (427 aa).

The protein belongs to the anaerobic G-3-P dehydrogenase subunit B family. In terms of assembly, composed of a catalytic GlpA/B dimer and of membrane bound GlpC. FMN serves as cofactor.

It catalyses the reaction a quinone + sn-glycerol 3-phosphate = dihydroxyacetone phosphate + a quinol. It participates in polyol metabolism; glycerol degradation via glycerol kinase pathway; glycerone phosphate from sn-glycerol 3-phosphate (anaerobic route): step 1/1. In terms of biological role, conversion of glycerol 3-phosphate to dihydroxyacetone. Uses fumarate or nitrate as electron acceptor. This Glaesserella parasuis serovar 5 (strain SH0165) (Haemophilus parasuis) protein is Anaerobic glycerol-3-phosphate dehydrogenase subunit B.